The sequence spans 54 residues: Ovomucoid (54 aa).

In terms of domain architecture, Kazal-like spans Val-4 to Cys-54. 3 disulfide bridges follow: Cys-6–Cys-36, Cys-14–Cys-33, and Cys-22–Cys-54. N-linked (GlcNAc...) asparagine glycosylation is present at Asn-43.

It localises to the secreted. This Alectoris chukar (Chukar partridge) protein is Ovomucoid.